A 160-amino-acid chain; its full sequence is Large ribosomal subunit protein uL16 (160 aa).

It belongs to the universal ribosomal protein uL16 family. Part of the 50S ribosomal subunit.

In terms of biological role, binds 23S rRNA and is also seen to make contacts with the A and possibly P site tRNAs. This is Large ribosomal subunit protein uL16 from Prochlorococcus marinus (strain MIT 9515).